The primary structure comprises 129 residues: Small ribosomal subunit protein bS6 (129 aa).

Residues 110-121 (FVRRDDERREDT) are compositionally biased toward basic and acidic residues. Positions 110–129 (FVRRDDERREDTVEAASSEE) are disordered.

The protein belongs to the bacterial ribosomal protein bS6 family.

In terms of biological role, binds together with bS18 to 16S ribosomal RNA. This chain is Small ribosomal subunit protein bS6, found in Aeromonas salmonicida (strain A449).